A 313-amino-acid chain; its full sequence is Ribosomal RNA small subunit methyltransferase H (313 aa).

S-adenosyl-L-methionine contacts are provided by residues 33 to 35 (AGH), Asp-53, Phe-82, Asp-103, and Gln-110.

It belongs to the methyltransferase superfamily. RsmH family.

It localises to the cytoplasm. It catalyses the reaction cytidine(1402) in 16S rRNA + S-adenosyl-L-methionine = N(4)-methylcytidine(1402) in 16S rRNA + S-adenosyl-L-homocysteine + H(+). In terms of biological role, specifically methylates the N4 position of cytidine in position 1402 (C1402) of 16S rRNA. The chain is Ribosomal RNA small subunit methyltransferase H from Acetivibrio thermocellus (strain ATCC 27405 / DSM 1237 / JCM 9322 / NBRC 103400 / NCIMB 10682 / NRRL B-4536 / VPI 7372) (Clostridium thermocellum).